We begin with the raw amino-acid sequence, 307 residues long: D-alanine--D-alanine ligase (307 aa).

Positions 101–301 (KTVMRAAGVD…FGELVRWMVE (201 aa)) constitute an ATP-grasp domain. Residue 127 to 182 (PLPPPYVVKPIAEGSSVGVIIVRDGRSHPPQILASEEWTFGEQVLAEPYIAGRELT) participates in ATP binding. Positions 251, 268, and 270 each coordinate Mg(2+).

This sequence belongs to the D-alanine--D-alanine ligase family. Requires Mg(2+) as cofactor. Mn(2+) serves as cofactor.

Its subcellular location is the cytoplasm. It carries out the reaction 2 D-alanine + ATP = D-alanyl-D-alanine + ADP + phosphate + H(+). Its pathway is cell wall biogenesis; peptidoglycan biosynthesis. Functionally, cell wall formation. The polypeptide is D-alanine--D-alanine ligase (Methylobacterium radiotolerans (strain ATCC 27329 / DSM 1819 / JCM 2831 / NBRC 15690 / NCIMB 10815 / 0-1)).